Here is a 287-residue protein sequence, read N- to C-terminus: MAERLTGKPVADAIKEELKGRVADLKAKGIVPKLGIVRVGARPDDLYYEGGAKKTCESIGMDYEVFEYPQDIDQESFEKAIIEIGAKKDIHGILMFSPLPKHLNERKIRSLIPVEKDVDSLTLGSAGKVFADDPTGFPPCTPTAVMEILKYYNIPLEGKRAVVLGRSLVVGKPAAILLLRENATVTICHSRTKNLPDVCREADILVAAVGRAKMVKEDYVKPGMVVIDVGINEDPDNPGKYCGDVDFDKVEPIVDKITPVPGGVGSVTTAVLCKHTVKACEILNGLV.

NADP(+) contacts are provided by residues 165–167 (GRS), Ser190, and Ile231.

The protein belongs to the tetrahydrofolate dehydrogenase/cyclohydrolase family. As to quaternary structure, homodimer.

The enzyme catalyses (6R)-5,10-methylene-5,6,7,8-tetrahydrofolate + NADP(+) = (6R)-5,10-methenyltetrahydrofolate + NADPH. The catalysed reaction is (6R)-5,10-methenyltetrahydrofolate + H2O = (6R)-10-formyltetrahydrofolate + H(+). It functions in the pathway one-carbon metabolism; tetrahydrofolate interconversion. Its function is as follows. Catalyzes the oxidation of 5,10-methylenetetrahydrofolate to 5,10-methenyltetrahydrofolate and then the hydrolysis of 5,10-methenyltetrahydrofolate to 10-formyltetrahydrofolate. The polypeptide is Bifunctional protein FolD (Carboxydothermus hydrogenoformans (strain ATCC BAA-161 / DSM 6008 / Z-2901)).